The chain runs to 184 residues: Large ribosomal subunit protein uL22A (184 aa).

Lysine 46 participates in a covalent cross-link: Glycyl lysine isopeptide (Lys-Gly) (interchain with G-Cter in ubiquitin). Threonine 70 carries the phosphothreonine modification.

The protein belongs to the universal ribosomal protein uL22 family. Component of the large ribosomal subunit (LSU). Mature yeast ribosomes consist of a small (40S) and a large (60S) subunit. The 40S small subunit contains 1 molecule of ribosomal RNA (18S rRNA) and 33 different proteins (encoded by 57 genes). The large 60S subunit contains 3 rRNA molecules (25S, 5.8S and 5S rRNA) and 46 different proteins (encoded by 81 genes). uL22 is associated with the polypeptide exit tunnel.

The protein localises to the cytoplasm. In terms of biological role, component of the ribosome, a large ribonucleoprotein complex responsible for the synthesis of proteins in the cell. The small ribosomal subunit (SSU) binds messenger RNAs (mRNAs) and translates the encoded message by selecting cognate aminoacyl-transfer RNA (tRNA) molecules. The large subunit (LSU) contains the ribosomal catalytic site termed the peptidyl transferase center (PTC), which catalyzes the formation of peptide bonds, thereby polymerizing the amino acids delivered by tRNAs into a polypeptide chain. The nascent polypeptides leave the ribosome through a tunnel in the LSU and interact with protein factors that function in enzymatic processing, targeting, and the membrane insertion of nascent chains at the exit of the ribosomal tunnel. The chain is Large ribosomal subunit protein uL22A from Saccharomyces cerevisiae (strain ATCC 204508 / S288c) (Baker's yeast).